Here is a 226-residue protein sequence, read N- to C-terminus: PKHD-type hydroxylase PiuC (226 aa).

The region spanning 78–178 is the Fe2OG dioxygenase domain; it reads KVFPPLFNCY…RYASFFWTQS (101 aa). His96, Asp98, and His159 together coordinate Fe cation. Position 169 (Arg169) interacts with 2-oxoglutarate.

Fe(2+) serves as cofactor. It depends on L-ascorbate as a cofactor.

This is PKHD-type hydroxylase PiuC (piuC) from Pseudomonas aeruginosa (strain ATCC 15692 / DSM 22644 / CIP 104116 / JCM 14847 / LMG 12228 / 1C / PRS 101 / PAO1).